The following is a 123-amino-acid chain: MARIAGIDLPREKRVEVGLTYIFGIGTSSAKKILKETGVNPDIRIKDLSEEEVNLLRDYINQNLKVEGDLRRDVALDIKRLKEIGSYRGIRHRRGLPVRGQKTKTNARTRKGPKKLVVSRKKK.

The disordered stretch occupies residues 92 to 123 (HRRGLPVRGQKTKTNARTRKGPKKLVVSRKKK).

It belongs to the universal ribosomal protein uS13 family. Part of the 30S ribosomal subunit. Forms a loose heterodimer with protein S19. Forms two bridges to the 50S subunit in the 70S ribosome.

Located at the top of the head of the 30S subunit, it contacts several helices of the 16S rRNA. In the 70S ribosome it contacts the 23S rRNA (bridge B1a) and protein L5 of the 50S subunit (bridge B1b), connecting the 2 subunits; these bridges are implicated in subunit movement. Contacts the tRNAs in the A and P-sites. This is Small ribosomal subunit protein uS13 from Clostridium tetani (strain Massachusetts / E88).